Here is a 70-residue protein sequence, read N- to C-terminus: Small ribosomal subunit protein bS21B (70 aa).

It belongs to the bacterial ribosomal protein bS21 family.

The chain is Small ribosomal subunit protein bS21B from Rhizobium etli (strain ATCC 51251 / DSM 11541 / JCM 21823 / NBRC 15573 / CFN 42).